We begin with the raw amino-acid sequence, 692 residues long: Elongation factor G (692 aa).

In terms of domain architecture, tr-type G spans 9–284; sequence EKIRNIGIMA…AVVDYLPSPV (276 aa). Residues 18-25, 82-86, and 136-139 contribute to the GTP site; these read AHIDAGKT, DTPGH, and NKMD.

Belongs to the TRAFAC class translation factor GTPase superfamily. Classic translation factor GTPase family. EF-G/EF-2 subfamily.

Its subcellular location is the cytoplasm. Functionally, catalyzes the GTP-dependent ribosomal translocation step during translation elongation. During this step, the ribosome changes from the pre-translocational (PRE) to the post-translocational (POST) state as the newly formed A-site-bound peptidyl-tRNA and P-site-bound deacylated tRNA move to the P and E sites, respectively. Catalyzes the coordinated movement of the two tRNA molecules, the mRNA and conformational changes in the ribosome. In Neorickettsia sennetsu (strain ATCC VR-367 / Miyayama) (Ehrlichia sennetsu), this protein is Elongation factor G.